We begin with the raw amino-acid sequence, 130 residues long: Large ribosomal subunit protein bL12 (130 aa).

It belongs to the bacterial ribosomal protein bL12 family. As to quaternary structure, homodimer. Part of the ribosomal stalk of the 50S ribosomal subunit. Forms a multimeric L10(L12)X complex, where L10 forms an elongated spine to which 2 to 4 L12 dimers bind in a sequential fashion. Binds GTP-bound translation factors.

Forms part of the ribosomal stalk which helps the ribosome interact with GTP-bound translation factors. Is thus essential for accurate translation. The polypeptide is Large ribosomal subunit protein bL12 (Mycolicibacterium gilvum (strain PYR-GCK) (Mycobacterium gilvum (strain PYR-GCK))).